The following is a 296-amino-acid chain: Homoserine kinase (296 aa).

92 to 102 (PQSRGLGSSAA) lines the ATP pocket.

It belongs to the GHMP kinase family. Homoserine kinase subfamily.

The protein localises to the cytoplasm. It catalyses the reaction L-homoserine + ATP = O-phospho-L-homoserine + ADP + H(+). Its pathway is amino-acid biosynthesis; L-threonine biosynthesis; L-threonine from L-aspartate: step 4/5. Functionally, catalyzes the ATP-dependent phosphorylation of L-homoserine to L-homoserine phosphate. The polypeptide is Homoserine kinase (Cutibacterium acnes (strain DSM 16379 / KPA171202) (Propionibacterium acnes)).